Here is a 333-residue protein sequence, read N- to C-terminus: Adenosine deaminase (333 aa).

Positions 12 and 14 each coordinate Zn(2+). Positions 14, 16, and 170 each coordinate substrate. A Zn(2+)-binding site is contributed by His-197. The active-site Proton donor is the Glu-200. Position 278 (Asp-278) interacts with Zn(2+). Residue Asp-279 coordinates substrate.

The protein belongs to the metallo-dependent hydrolases superfamily. Adenosine and AMP deaminases family. Adenosine deaminase subfamily. Requires Zn(2+) as cofactor.

It carries out the reaction adenosine + H2O + H(+) = inosine + NH4(+). It catalyses the reaction 2'-deoxyadenosine + H2O + H(+) = 2'-deoxyinosine + NH4(+). Functionally, catalyzes the hydrolytic deamination of adenosine and 2-deoxyadenosine. In Escherichia coli (strain SMS-3-5 / SECEC), this protein is Adenosine deaminase.